Reading from the N-terminus, the 148-residue chain is MKLDLKILDARMRDYLPAYATTGSAGLDLRACLDAPVTLQPGETTLVPTGLAIHLADPGYAALILPRSGLGHKHGIVLGNLVGLIDSDYQGQLMVSTWNRGQTEFVLNPFERLAQLVIVPVVQAQFNIVDEFTESDRGEGGFGSTGRH.

Substrate contacts are provided by residues 67-69 (RSG), asparagine 80, 84-86 (LID), and methionine 94.

Belongs to the dUTPase family. The cofactor is Mg(2+).

The catalysed reaction is dUTP + H2O = dUMP + diphosphate + H(+). The protein operates within pyrimidine metabolism; dUMP biosynthesis; dUMP from dCTP (dUTP route): step 2/2. Functionally, this enzyme is involved in nucleotide metabolism: it produces dUMP, the immediate precursor of thymidine nucleotides and it decreases the intracellular concentration of dUTP so that uracil cannot be incorporated into DNA. This is Deoxyuridine 5'-triphosphate nucleotidohydrolase from Burkholderia cenocepacia (strain ATCC BAA-245 / DSM 16553 / LMG 16656 / NCTC 13227 / J2315 / CF5610) (Burkholderia cepacia (strain J2315)).